Here is a 1328-residue protein sequence, read N- to C-terminus: MSSMPKPERHAESLLDICHDTNSSPTDLMTVTKNQNIILQSISRSEEFDQDGDCSHSTLVNEEEDPSGGRQDWQPRTEGVEITVTFPRDVSPPQEMSQEDLKEKNLINSSLQEWAQAHAVSHPNEIETVELRKKKLTMRPLVLQKEESSRELCNVNLGFLLPRSCLELNISKSVTREDAPHFLKEQQRKSEEFSTSHMKYSGRSIKFLLPPLSLLPTRSGVLTIPQNHKFPKEKERNIPSLTSFVPKLSVSVRQSDELSPSNEPPGALVKSLMDPTLRSSDGFIWSRNMCSFPKTNHHRQCLEKEENWKSKEIEECNKIEITHFEKGQSLVSFENLKEGNIPAVREEDIDCHGSKTRKPEEENSQYLSSRKNESSVAKNYEQDPEIVCTIPSKFQETQHSEITPSQDEEMRNNKAASKRVSLHKNEAMEPNNILEECTVLKSLSSVVFDDPIDKLPEGCSSMETNIKISIAERAKPEMSRMVPLIHITFPVDGSPKEPVIAKPSLQTRKGTIHNNHSVNIPVHQENDKHKMNSHRSKLDSKTKTSKKTPQNFVISTEGPIKPTMHKTSIKTQIFPALGLVDPRPWQLPRFQKKMPQIAKKQSTHRTQKPKKQSFPCICKNPGTQKSCVPLSVQPTEPRLNYLDLKYSDMFKEINSTANGPGIYEMFGTPVYCHVRETERDENTYYREICSAPSGRRITNKCRSSHSERKSNIRTRLSQKKTHMKCPKTSFGIKQEHKVLISKEKSSKAVHSNLHDIENGDGISEPDWQIKSSGNEFLSSKDEIHPMNLAQTPEQSMKQNEFPPVSDLSIVEEVSMEESTGDRDISNNQILTTSLRDLQELEELHHQIPFIPSEDSWAVPSEKNSNKYVQQEKQNTASLSKVNASRILTNDLEFDSVSDHSKTLTNFSFQAKQESASSQTYQYWVHYLDHDSLANKSITYQMFGKTLSGTNSISQEIMDSVNNEELTDELLGCLAAELLALDEKDNNSCQKMANETDPENLNLVLRWRGSTPKEMGRETTKVKIQRHSSGLRIYDREEKFLISNEKKIFSENSLKSEEPILWTKGEILGKGAYGTVYCGLTSQGQLIAVKQVALDTSNKLAAEKEYRKLQEEVDLLKALKHVNIVAYLGTCLQENTVSIFMEFVPGGSISSIINRFGPLPEMVFCKYTKQILQGVAYLHENCVVHRDIKGNNVMLMPTGIIKLIDFGCARRLAWAGLNGTHSDMLKSMHGTPYWMAPEVINESGYGRKSDIWSIGCTVFEMATGKPPLASMDRMAAMFYIGAHRGLMPPLPDHFSENAADFVRMCLTRDQHERPSALQLLKHSFLERSH.

Positions 1-19 (MSSMPKPERHAESLLDICH) are enriched in basic and acidic residues. Disordered stretches follow at residues 1–28 (MSSM…PTDL), 44–74 (RSEE…QDWQ), 344–380 (VREE…AKNY), and 524–561 (QEND…GPIK). A compositionally biased stretch (basic and acidic residues) spans 344–361 (VREEDIDCHGSKTRKPEE). Polar residues predominate over residues 364–377 (SQYLSSRKNESSVA). Residues 524–542 (QENDKHKMNSHRSKLDSKT) are compositionally biased toward basic and acidic residues. Residues 1061–1324 (WTKGEILGKG…ALQLLKHSFL (264 aa)) enclose the Protein kinase domain. ATP contacts are provided by residues 1067–1075 (LGKGAYGTV) and lysine 1089. The active-site Proton acceptor is the aspartate 1186.

Belongs to the protein kinase superfamily. STE Ser/Thr protein kinase family. STE20 subfamily.

It carries out the reaction L-seryl-[protein] + ATP = O-phospho-L-seryl-[protein] + ADP + H(+). The enzyme catalyses L-threonyl-[protein] + ATP = O-phospho-L-threonyl-[protein] + ADP + H(+). In Homo sapiens (Human), this protein is Mitogen-activated protein kinase kinase kinase 19 (MAP3K19).